A 395-amino-acid polypeptide reads, in one-letter code: Proteinase-activated receptor 4 (395 aa).

The first 16 residues, 1 to 16 (MCWPLLYPLMLGFSIS), serve as a signal peptide directing secretion. The propeptide at 17-58 (PAECQTPSIYDDVESTREGQEASLRPTVELNESKSPDKPNPR) is removed for receptor activation. The segment at 46–66 (LNESKSPDKPNPRGFPGKPCA) is disordered. The span at 47–56 (NESKSPDKPN) shows a compositional bias: basic and acidic residues. Residues 59–93 (GFPGKPCANNSDTLELPASSEALLLGWVPTRLVPA) are Extracellular-facing. N67 carries an N-linked (GlcNAc...) asparagine glycan. Residues 94-114 (IYGLVVVVGLPANGLALWVLA) traverse the membrane as a helical segment. Over 115–119 (TRVPR) the chain is Cytoplasmic. The chain crosses the membrane as a helical span at residues 120–140 (LPSTILLMNLAVADLLLALVL). The Extracellular segment spans residues 141-161 (PPRLVYHLRGQRWPFGEAACR). C160 and C239 are disulfide-bonded. Residues 162–182 (VATAALYGHMYGSVLLLAAVS) traverse the membrane as a helical segment. Over 183 to 203 (LDRYLALVHSLRARALRGQRL) the chain is Cytoplasmic. The chain crosses the membrane as a helical span at residues 204-224 (TTILCLVAWLSAATLVLPLTF). Residues 225-254 (HRQTFLLAGSDRMLCHDALPLAEQTSHWRP) lie on the Extracellular side of the membrane. Residues 255–275 (AFICLAVLGCFVPLLAMVLCY) form a helical membrane-spanning segment. Over 276–295 (GATLRALAANGQRYSHAVRL) the chain is Cytoplasmic. A helical transmembrane segment spans residues 296–316 (TALVLFSAVAAFTPSNVLLVL). Over 317–330 (HYSNPSPEAWGNLY) the chain is Extracellular. Residues 331 to 354 (GAYVPSLALSTLNSCVDPFIYYYV) traverse the membrane as a helical segment. Residues 355-395 (SHEFREKVRAMLCRQLKASSSSQASREAGSRGTAICSSTLL) are Cytoplasmic-facing.

This sequence belongs to the G-protein coupled receptor 1 family. Post-translationally, a proteolytic cleavage generates a new N-terminus that functions as a tethered ligand.

The protein resides in the cell membrane. Functionally, receptor for activated thrombin or trypsin coupled to G proteins that stimulate phosphoinositide hydrolysis. May play a role in platelets activation. This chain is Proteinase-activated receptor 4 (F2rl3), found in Rattus norvegicus (Rat).